The chain runs to 58 residues: U-scoloptoxin(14)-Sa1a (58 aa).

The signal sequence occupies residues 1–18 (MNRILGMIFLFCLISCYA).

This sequence belongs to the scoloptoxin-14 family. Post-translationally, contains 4 disulfide bonds. In terms of tissue distribution, expressed by the venom gland.

Its subcellular location is the secreted. This Scolopendra alternans (Florida Keys giant centipede) protein is U-scoloptoxin(14)-Sa1a.